A 174-amino-acid polypeptide reads, in one-letter code: Gamma-crystallin D (174 aa).

Beta/gamma crystallin 'Greek key' domains lie at 2 to 40 (GKIT…RVDS) and 41 to 83 (GCWM…RLIP). Positions 84–87 (HSGS) are connecting peptide. Beta/gamma crystallin 'Greek key' domains are found at residues 88-128 (HRIR…NVLE) and 129-171 (GSWV…RRVI).

It belongs to the beta/gamma-crystallin family. Monomer.

Crystallins are the dominant structural components of the vertebrate eye lens. This is Gamma-crystallin D (CRYGD) from Homo sapiens (Human).